The chain runs to 219 residues: Large ribosomal subunit protein uL3 (219 aa).

Disordered regions lie at residues 62-81 and 136-156; these read DSRS…KKAG and QARG…SVGM.

Belongs to the universal ribosomal protein uL3 family. Part of the 50S ribosomal subunit. Forms a cluster with proteins L14 and L19.

Functionally, one of the primary rRNA binding proteins, it binds directly near the 3'-end of the 23S rRNA, where it nucleates assembly of the 50S subunit. This chain is Large ribosomal subunit protein uL3, found in Staphylococcus saprophyticus subsp. saprophyticus (strain ATCC 15305 / DSM 20229 / NCIMB 8711 / NCTC 7292 / S-41).